Reading from the N-terminus, the 94-residue chain is Co-chaperonin GroES (94 aa).

Heptamer of 7 subunits arranged in a ring. Interacts with the chaperonin GroEL.

Its subcellular location is the cytoplasm. In terms of biological role, together with the chaperonin GroEL, plays an essential role in assisting protein folding. The GroEL-GroES system forms a nano-cage that allows encapsulation of the non-native substrate proteins and provides a physical environment optimized to promote and accelerate protein folding. GroES binds to the apical surface of the GroEL ring, thereby capping the opening of the GroEL channel. The polypeptide is Co-chaperonin GroES (Thermoanaerobacter brockii (Thermoanaerobium brockii)).